The sequence spans 52 residues: Large ribosomal subunit protein bL33 (52 aa).

The protein belongs to the bacterial ribosomal protein bL33 family.

This chain is Large ribosomal subunit protein bL33, found in Campylobacter jejuni subsp. doylei (strain ATCC BAA-1458 / RM4099 / 269.97).